We begin with the raw amino-acid sequence, 768 residues long: Glucoamylase S2 (768 aa).

Residues 1–21 form the signal peptide; it reads MQRPFLLAYLVLSLLFNSALG. 2 disordered regions span residues 29 to 83 and 125 to 149; these read RGSS…ETTI and TTTV…PTTP. Over residues 30–48 the composition is skewed to low complexity; that stretch reads GSSSSNITSSGPSSTPFSS. N35 carries an N-linked (GlcNAc...) asparagine glycan. A compositionally biased stretch (polar residues) spans 49–66; it reads ATESFSTGTTVTPSSSKY. Composition is skewed to low complexity over residues 71-83 and 131-149; these read TETS…ETTI and STSP…PTTP. N309, N323, N415, N424, and N435 each carry an N-linked (GlcNAc...) asparagine glycan. Residues 349–692 are h subunit; sequence VSIERIFENI…ASTTLYQLIY (344 aa). Residue W456 coordinates substrate. N514 is a glycosylation site (N-linked (GlcNAc...) asparagine). D519 acts as the Proton acceptor in catalysis. E522 functions as the Proton donor in the catalytic mechanism. 5 N-linked (GlcNAc...) asparagine glycosylation sites follow: N547, N646, N651, N721, and N742. The segment at 693 to 768 is y subunit; it reads RHISEQHDLV…LKATWEQTGN (76 aa).

It belongs to the glycosyl hydrolase 15 family.

The catalysed reaction is Hydrolysis of terminal (1-&gt;4)-linked alpha-D-glucose residues successively from non-reducing ends of the chains with release of beta-D-glucose.. This Saccharomyces cerevisiae (Baker's yeast) protein is Glucoamylase S2 (STA2).